The following is a 934-amino-acid chain: Diacylglycerol kinase theta (934 aa).

Residues 1 to 50 form a disordered region; it reads MAAAAEPGARTWPGSGSPRLGSPAGSPVLGISGRTRPGSGPERTSRAIGS. 2 positions are modified to phosphoserine: serine 22 and serine 26. 3 consecutive Phorbol-ester/DAG-type zinc fingers follow at residues 54 to 102, 115 to 162, and 177 to 228; these read GHSF…KTPC, AHCF…CSDC, and HHHW…APEC. One can recognise a Ras-associating domain in the interval 387–486; it reads TQEILKIYPG…TRFYVAETRA (100 aa). 2 consecutive short sequence motifs (LXXLL motif) follow at residues 547 to 551 and 566 to 570; these read LYMLA and LPDVL. The DAGKc domain maps to 576 to 713; sequence PDCCPLLVFV…MDRWTILLDA (138 aa). Basic residues predominate over residues 905–916; the sequence is LRKAKQKPRKAG. Positions 905–934 are disordered; the sequence is LRKAKQKPRKAGANRDTRVDTLPAPEGNPL.

The protein belongs to the eukaryotic diacylglycerol kinase family. In terms of assembly, interacts with RHOA (constitutively activated, GTP-bound); the interaction inhibits DGKQ. Interacts with PRKCE. Interacts with PRKCH. Interacts with PLCB1. Interacts with NR5A1; the interaction requires both LXXLL motifs in DGKQ and is required for full phosphatidic acid-mediated activation of NR5A1. Phosphorylated by PRKCE and PRKCH in vitro. As to expression, widely expressed in all brain regions, including the cortex and hippocampus with a specific expression in neuronal cells (at protein level).

Its subcellular location is the cytoplasm. The protein resides in the cytosol. The protein localises to the cell membrane. It is found in the synapse. It localises to the cytoskeleton. Its subcellular location is the nucleus. The protein resides in the nucleus speckle. The protein localises to the nucleus matrix. The enzyme catalyses a 1,2-diacyl-sn-glycerol + ATP = a 1,2-diacyl-sn-glycero-3-phosphate + ADP + H(+). The catalysed reaction is a 1-O-alkyl-sn-glycerol + ATP = a 1-O-alkyl-sn-glycero-3-phosphate + ADP + H(+). It catalyses the reaction 1-O-alkyl-2-acyl-sn-glycerol + ATP = 1-O-alkyl-2-acyl-sn-glycero-3-phosphate + ADP + H(+). It carries out the reaction 1,2-di-(9Z-octadecenoyl)-sn-glycerol + ATP = 1,2-di-(9Z-octadecenoyl)-sn-glycero-3-phosphate + ADP + H(+). The enzyme catalyses 1-O-hexadecyl-sn-glycerol + ATP = 1-O-hexadecyl-sn-glycero-3-phosphate + ADP + H(+). The catalysed reaction is 1-O-hexadecyl-2-acetyl-sn-glycerol + ATP = 1-O-hexadecyl-2-acetyl-sn-glycero-3-phosphate + ADP + H(+). It catalyses the reaction 1-octadecanoyl-2-(5Z,8Z,11Z,14Z-eicosatetraenoyl)-sn-glycerol + ATP = 1-octadecanoyl-2-(5Z,8Z,11Z,14Z-eicosatetraenoyl)-sn-glycero-3-phosphate + ADP + H(+). The protein operates within lipid metabolism; glycerolipid metabolism. With respect to regulation, activated by phosphatidylserine. Diacylglycerol kinase that converts diacylglycerol/DAG into phosphatidic acid/phosphatidate/PA and regulates the respective levels of these two bioactive lipids. Thereby, acts as a central switch between the signaling pathways activated by these second messengers with different cellular targets and opposite effects in numerous biological processes. Within the adrenocorticotropic hormone signaling pathway, produces phosphatidic acid which in turn activates NR5A1 and subsequent steroidogenic gene transcription. Also functions downstream of the nerve growth factor signaling pathway being specifically activated in the nucleus by the growth factor. Through its diacylglycerol activity also regulates synaptic vesicle endocytosis. The polypeptide is Diacylglycerol kinase theta (Dgkq) (Mus musculus (Mouse)).